Here is a 323-residue protein sequence, read N- to C-terminus: Glutathione synthetase (323 aa).

Positions 133–317 (KMYALQFQSV…IGDQTIAALE (185 aa)) constitute an ATP-grasp domain. ATP is bound at residue 159–215 (LDELRAAVLKPLGGKAGEGILFLDPGDRNFNSLVEISTQQGQLPVMVQQYLPEAKDG). 2 residues coordinate Mg(2+): glutamate 288 and asparagine 290.

It belongs to the prokaryotic GSH synthase family. It depends on Mg(2+) as a cofactor. Mn(2+) is required as a cofactor.

It catalyses the reaction gamma-L-glutamyl-L-cysteine + glycine + ATP = glutathione + ADP + phosphate + H(+). It participates in sulfur metabolism; glutathione biosynthesis; glutathione from L-cysteine and L-glutamate: step 2/2. This is Glutathione synthetase from Synechococcus elongatus (strain ATCC 33912 / PCC 7942 / FACHB-805) (Anacystis nidulans R2).